A 223-amino-acid polypeptide reads, in one-letter code: Putative 3-methyladenine DNA glycosylase (223 aa).

Belongs to the DNA glycosylase MPG family.

This chain is Putative 3-methyladenine DNA glycosylase, found in Pseudomonas syringae pv. syringae (strain B728a).